Here is a 138-residue protein sequence, read N- to C-terminus: Basic phospholipase A2 Pla2Vb (138 aa).

A signal peptide spans 1–16 (MRTLWIVAVWLMGVEG). 7 disulfide bridges follow: Cys42–Cys131, Cys44–Cys60, Cys59–Cys111, Cys65–Cys138, Cys66–Cys104, Cys73–Cys97, and Cys91–Cys102. Ca(2+) contacts are provided by Tyr43, Gly45, and Gly47. His63 is an active-site residue. Ca(2+) is bound at residue Asp64. Asp105 is an active-site residue.

It belongs to the phospholipase A2 family. Group II subfamily. D49 sub-subfamily. Ca(2+) serves as cofactor. Expressed by the venom gland.

It is found in the secreted. It catalyses the reaction a 1,2-diacyl-sn-glycero-3-phosphocholine + H2O = a 1-acyl-sn-glycero-3-phosphocholine + a fatty acid + H(+). Functionally, snake venom phospholipase A2 (PLA2) that exhibits medium anticoagulant effects by binding to factor Xa (F10) and inhibiting the prothrombinase activity (IC(50) is 90 nM). PLA2 catalyzes the calcium-dependent hydrolysis of the 2-acyl groups in 3-sn-phosphoglycerides. The polypeptide is Basic phospholipase A2 Pla2Vb (Vipera berus berus (Common viper)).